Consider the following 520-residue polypeptide: Bile acid--coenzyme A ligase (520 aa).

The protein belongs to the ATP-dependent AMP-binding enzyme family. Homodimer. It depends on Mg(2+) as a cofactor.

It catalyses the reaction cholate + ATP + CoA = choloyl-CoA + AMP + diphosphate. The catalysed reaction is deoxycholate + ATP + CoA = deoxycholoyl-CoA + AMP + diphosphate. It carries out the reaction chenodeoxycholate + ATP + CoA = chenodeoxycholoyl-CoA + AMP + diphosphate. It functions in the pathway lipid metabolism; bile acid biosynthesis. With respect to regulation, inhibited by diphosphate. In terms of biological role, functions in the bile acid 7alpha-dehydroxylation pathway, which forms secondary bile acids via the 7alpha-dehydroxylation of primary bile acids, and is carried out by intestinal anaerobic bacteria. Catalyzes the initial step in this pathway, i.e. the ATP-dependent thioesterification of primary bile acids with coenzyme A. Is active with C-24 bile acids with free carboxyl groups such as cholate, deoxycholate and chenodeoxycholate. Produces AMP and pyrophosphate in addition to the bile acid-CoA thioester. In Clostridium scindens (strain JCM 10418 / VPI 12708), this protein is Bile acid--coenzyme A ligase.